A 501-amino-acid polypeptide reads, in one-letter code: Cytochrome P450 monooxygenase 76AD131 (501 aa).

The chain crosses the membrane as a helical span at residues 1–21 (MGYYAIFAVVLPFLWTCFYLL). N115 and N264 each carry an N-linked (GlcNAc...) asparagine glycan. Heme is bound at residue C444.

This sequence belongs to the cytochrome P450 family. Requires heme as cofactor. As to expression, highly expressed in aerial parts, in both skin and flesh tissues.

It localises to the membrane. It carries out the reaction tyramine + reduced [NADPH--hemoprotein reductase] + O2 = dopamine + oxidized [NADPH--hemoprotein reductase] + H2O + H(+). The enzyme catalyses 3-methoxytyramine + reduced [NADPH--hemoprotein reductase] + O2 = 3,4-dihydroxy-5-methoxyphenethylamine + oxidized [NADPH--hemoprotein reductase] + H2O + H(+). It participates in aromatic compound metabolism. The protein operates within alkaloid biosynthesis. Cytochrome P450 monooxygenase participating in the biosynthesis of natural products derived from phenylethylamine, including mescaline, a natural hallucinogen potentially used in psychotherapeutic treatments. Catalyzes the hydroxylation of tyramine to dopamine and of 3-methoxytyramine to 3,4-dihydroxy-5-methoxyphenethylamine. The protein is Cytochrome P450 monooxygenase 76AD131 of Lophophora williamsii (Peyote).